The primary structure comprises 185 residues: Large ribosomal subunit protein uL5 (185 aa).

Belongs to the universal ribosomal protein uL5 family. Part of the 50S ribosomal subunit; part of the 5S rRNA/L5/L18/L25 subcomplex. Contacts the 5S rRNA and the P site tRNA. Forms a bridge to the 30S subunit in the 70S ribosome.

Its function is as follows. This is one of the proteins that bind and probably mediate the attachment of the 5S RNA into the large ribosomal subunit, where it forms part of the central protuberance. In the 70S ribosome it contacts protein S13 of the 30S subunit (bridge B1b), connecting the 2 subunits; this bridge is implicated in subunit movement. Contacts the P site tRNA; the 5S rRNA and some of its associated proteins might help stabilize positioning of ribosome-bound tRNAs. This Rhizobium etli (strain CIAT 652) protein is Large ribosomal subunit protein uL5.